The primary structure comprises 215 residues: Large ribosomal subunit protein bL25 (215 aa).

A compositionally biased stretch (acidic residues) spans 192 to 203 (EEATEEEEEAAE). The interval 192–215 (EEATEEEEEAAEPEVIKRKEEEEE) is disordered. Basic and acidic residues predominate over residues 205–215 (EVIKRKEEEEE).

The protein belongs to the bacterial ribosomal protein bL25 family. CTC subfamily. Part of the 50S ribosomal subunit; part of the 5S rRNA/L5/L18/L25 subcomplex. Contacts the 5S rRNA. Binds to the 5S rRNA independently of L5 and L18.

This is one of the proteins that binds to the 5S RNA in the ribosome where it forms part of the central protuberance. In Thermotoga sp. (strain RQ2), this protein is Large ribosomal subunit protein bL25.